Consider the following 62-residue polypeptide: Photosystem II reaction center protein Z (62 aa).

2 helical membrane-spanning segments follow: residues 8–28 (AVFA…VVFA) and 41–61 (FSGT…NSLI).

This sequence belongs to the PsbZ family. PSII is composed of 1 copy each of membrane proteins PsbA, PsbB, PsbC, PsbD, PsbE, PsbF, PsbH, PsbI, PsbJ, PsbK, PsbL, PsbM, PsbT, PsbY, PsbZ, Psb30/Ycf12, at least 3 peripheral proteins of the oxygen-evolving complex and a large number of cofactors. It forms dimeric complexes.

It localises to the plastid. The protein resides in the chloroplast thylakoid membrane. In terms of biological role, may control the interaction of photosystem II (PSII) cores with the light-harvesting antenna, regulates electron flow through the 2 photosystem reaction centers. PSII is a light-driven water plastoquinone oxidoreductase, using light energy to abstract electrons from H(2)O, generating a proton gradient subsequently used for ATP formation. The protein is Photosystem II reaction center protein Z of Liriodendron tulipifera (Tuliptree).